The chain runs to 380 residues: Deoxyguanosinetriphosphate triphosphohydrolase-like protein (380 aa).

The disordered stretch occupies residues 1 to 28; the sequence is MYAPYATMPDRSRGRAVPEEESSFRSPF. The region spanning 62-198 is the HD domain; sequence RLTHSIEVGQ…AALADDIAYN (137 aa).

The protein belongs to the dGTPase family. Type 2 subfamily.

This is Deoxyguanosinetriphosphate triphosphohydrolase-like protein from Ruegeria sp. (strain TM1040) (Silicibacter sp.).